A 766-amino-acid chain; its full sequence is 5-methyltetrahydropteroyltriglutamate--homocysteine methyltransferase (766 aa).

5-methyltetrahydropteroyltri-L-glutamate is bound by residues 16 to 19 (RELK) and Lys-124. L-homocysteine contacts are provided by residues 445–447 (IGS) and Glu-498. L-methionine-binding positions include 445-447 (IGS) and Glu-498. Residues 529 to 530 (RC) and Trp-575 contribute to the 5-methyltetrahydropteroyltri-L-glutamate site. Position 613 (Asp-613) interacts with L-homocysteine. Asp-613 serves as a coordination point for L-methionine. Position 619 (Glu-619) interacts with 5-methyltetrahydropteroyltri-L-glutamate. The Zn(2+) site is built by His-655, Cys-657, and Glu-679. The active-site Proton donor is His-708. Cys-740 serves as a coordination point for Zn(2+).

This sequence belongs to the vitamin-B12 independent methionine synthase family. The cofactor is Zn(2+).

It carries out the reaction 5-methyltetrahydropteroyltri-L-glutamate + L-homocysteine = tetrahydropteroyltri-L-glutamate + L-methionine. It participates in amino-acid biosynthesis; L-methionine biosynthesis via de novo pathway; L-methionine from L-homocysteine (MetE route): step 1/1. In terms of biological role, catalyzes the transfer of a methyl group from 5-methyltetrahydrofolate to homocysteine resulting in methionine formation. This chain is 5-methyltetrahydropteroyltriglutamate--homocysteine methyltransferase, found in Pseudomonas syringae pv. tomato (strain ATCC BAA-871 / DC3000).